The following is a 267-amino-acid chain: 4-hydroxy-tetrahydrodipicolinate reductase (267 aa).

NAD(+)-binding positions include 12 to 17 (GPRGRM), 100 to 102 (GTT), and 126 to 129 (APNF). The active-site Proton donor/acceptor is His-156. A (S)-2,3,4,5-tetrahydrodipicolinate-binding site is contributed by His-157. Lys-160 (proton donor) is an active-site residue. 166-167 (GT) serves as a coordination point for (S)-2,3,4,5-tetrahydrodipicolinate.

Belongs to the DapB family.

Its subcellular location is the cytoplasm. It carries out the reaction (S)-2,3,4,5-tetrahydrodipicolinate + NAD(+) + H2O = (2S,4S)-4-hydroxy-2,3,4,5-tetrahydrodipicolinate + NADH + H(+). It catalyses the reaction (S)-2,3,4,5-tetrahydrodipicolinate + NADP(+) + H2O = (2S,4S)-4-hydroxy-2,3,4,5-tetrahydrodipicolinate + NADPH + H(+). The protein operates within amino-acid biosynthesis; L-lysine biosynthesis via DAP pathway; (S)-tetrahydrodipicolinate from L-aspartate: step 4/4. Functionally, catalyzes the conversion of 4-hydroxy-tetrahydrodipicolinate (HTPA) to tetrahydrodipicolinate. The chain is 4-hydroxy-tetrahydrodipicolinate reductase from Bacillus licheniformis (strain ATCC 14580 / DSM 13 / JCM 2505 / CCUG 7422 / NBRC 12200 / NCIMB 9375 / NCTC 10341 / NRRL NRS-1264 / Gibson 46).